A 558-amino-acid chain; its full sequence is Dihydroxy-acid dehydratase (558 aa).

Position 81 (aspartate 81) interacts with Mg(2+). [2Fe-2S] cluster is bound at residue cysteine 122. Residues aspartate 123 and lysine 124 each contribute to the Mg(2+) site. The residue at position 124 (lysine 124) is an N6-carboxylysine. [2Fe-2S] cluster is bound at residue cysteine 195. Residue glutamate 447 coordinates Mg(2+). Serine 473 serves as the catalytic Proton acceptor.

This sequence belongs to the IlvD/Edd family. In terms of assembly, homodimer. [2Fe-2S] cluster is required as a cofactor. Requires Mg(2+) as cofactor.

The catalysed reaction is (2R)-2,3-dihydroxy-3-methylbutanoate = 3-methyl-2-oxobutanoate + H2O. The enzyme catalyses (2R,3R)-2,3-dihydroxy-3-methylpentanoate = (S)-3-methyl-2-oxopentanoate + H2O. The protein operates within amino-acid biosynthesis; L-isoleucine biosynthesis; L-isoleucine from 2-oxobutanoate: step 3/4. It participates in amino-acid biosynthesis; L-valine biosynthesis; L-valine from pyruvate: step 3/4. Functions in the biosynthesis of branched-chain amino acids. Catalyzes the dehydration of (2R,3R)-2,3-dihydroxy-3-methylpentanoate (2,3-dihydroxy-3-methylvalerate) into 2-oxo-3-methylpentanoate (2-oxo-3-methylvalerate) and of (2R)-2,3-dihydroxy-3-methylbutanoate (2,3-dihydroxyisovalerate) into 2-oxo-3-methylbutanoate (2-oxoisovalerate), the penultimate precursor to L-isoleucine and L-valine, respectively. In Bacillus velezensis (strain DSM 23117 / BGSC 10A6 / LMG 26770 / FZB42) (Bacillus amyloliquefaciens subsp. plantarum), this protein is Dihydroxy-acid dehydratase.